A 191-amino-acid polypeptide reads, in one-letter code: Leucyl/phenylalanyl-tRNA--protein transferase (191 aa).

This sequence belongs to the L/F-transferase family.

It localises to the cytoplasm. The catalysed reaction is N-terminal L-lysyl-[protein] + L-leucyl-tRNA(Leu) = N-terminal L-leucyl-L-lysyl-[protein] + tRNA(Leu) + H(+). The enzyme catalyses N-terminal L-arginyl-[protein] + L-leucyl-tRNA(Leu) = N-terminal L-leucyl-L-arginyl-[protein] + tRNA(Leu) + H(+). It catalyses the reaction L-phenylalanyl-tRNA(Phe) + an N-terminal L-alpha-aminoacyl-[protein] = an N-terminal L-phenylalanyl-L-alpha-aminoacyl-[protein] + tRNA(Phe). In terms of biological role, functions in the N-end rule pathway of protein degradation where it conjugates Leu, Phe and, less efficiently, Met from aminoacyl-tRNAs to the N-termini of proteins containing an N-terminal arginine or lysine. This chain is Leucyl/phenylalanyl-tRNA--protein transferase, found in Trichormus variabilis (strain ATCC 29413 / PCC 7937) (Anabaena variabilis).